The chain runs to 219 residues: Large ribosomal subunit protein mL67 (219 aa).

It belongs to the mitochondrion-specific ribosomal protein mL67 family.

The protein resides in the nucleus. The protein localises to the mitochondrion. Transcription factor involved in regulation of RNA polymerase II-dependent transcription. Also involved in regulation of mitochondrial DNA recombination, maintenance and repair, and generation of homoplasmic cells. The chain is Large ribosomal subunit protein mL67 (MHR1) from Kluyveromyces lactis (strain ATCC 8585 / CBS 2359 / DSM 70799 / NBRC 1267 / NRRL Y-1140 / WM37) (Yeast).